Here is a 622-residue protein sequence, read N- to C-terminus: Cilia- and flagella-associated protein 206 (622 aa).

The interval 571–592 (QVYPPKDTSTQSMREDSTGVPR) is disordered.

It belongs to the CFAP206 family.

Its subcellular location is the cytoplasm. The protein localises to the cytoskeleton. The protein resides in the cilium axoneme. It is found in the cilium basal body. Essential for sperm motility and is involved in the regulation of the beating frequency of motile cilia on the epithelial cells of the respiratory tract. Required for the establishment of radial spokes in sperm flagella. This is Cilia- and flagella-associated protein 206 from Macaca fascicularis (Crab-eating macaque).